Here is a 359-residue protein sequence, read N- to C-terminus: Small ribosomal subunit protein mS22 (359 aa).

The protein belongs to the mitochondrion-specific ribosomal protein mS22 family. Component of the mitochondrial ribosome small subunit (28S) which comprises a 12S rRNA and about 30 distinct proteins.

Its subcellular location is the mitochondrion. The polypeptide is Small ribosomal subunit protein mS22 (MRPS22) (Bos taurus (Bovine)).